The chain runs to 166 residues: MSKLNDKHERVRARVREAFILFEHKEGSRLVDFKDVPTAVRACGVNPTAVQMTHILDQLAALNAETDATGYVGLENFELVVCNFLIQQEASLFRDDYHTLLRAFRAFDPDGRGFIDAESFKSLLTGKGEALSEDELAKMMTVAADGEGKIWYEDYAQRLANDGRTI.

The 36-residue stretch at 95–130 (DDYHTLLRAFRAFDPDGRGFIDAESFKSLLTGKGEA) folds into the EF-hand domain.

The protein belongs to the DRC8 family. As to quaternary structure, component of the nexin-dynein regulatory complex (N-DRC).

It localises to the cytoplasm. It is found in the cytoskeleton. The protein resides in the flagellum axoneme. In terms of biological role, component of the nexin-dynein regulatory complex (N-DRC), a key regulator of ciliary/flagellar motility which maintains the alignment and integrity of the distal axoneme and regulates microtubule sliding in motile axonemes. The chain is Dynein regulatory complex protein 8 from Chlamydomonas reinhardtii (Chlamydomonas smithii).